We begin with the raw amino-acid sequence, 149 residues long: Calmodulin-1 (149 aa).

A2 bears the N-acetylalanine mark. 4 EF-hand domains span residues 8–43 (EQIAEFKEAFSLFDKDGDGCITTKELGTVMRSLGQN), 44–79 (PTEAELQDMISEADADQNGTIDFPEFLNLMARKMKD), 81–116 (DSEEELKEAFKVFDKDQNGFISAAELRHVMTNLGEK), and 117–149 (LTDEEVDEMIREADIDGDGQVNYEEFVRMMLAK). 14 residues coordinate Ca(2+): D21, D23, D25, C27, E32, D57, D59, N61, T63, E68, D94, D96, N98, and E105. K116 bears the N6,N6,N6-trimethyllysine mark. 5 residues coordinate Ca(2+): D130, D132, D134, Q136, and E141.

This sequence belongs to the calmodulin family. High expression in stolon tips and stems, moderate in roots, and very low in leaves. Localized in the meristematic regions of the shoot and root tips, the tip of the developing tuber and the vascular zones of petiole and tuber. Not detected in mesophyll cells.

Functionally, calmodulin mediates the control of a large number of enzymes, ion channels and other proteins by Ca(2+). Among the enzymes to be stimulated by the calmodulin-Ca(2+) complex are a number of protein kinases and phosphatases. The chain is Calmodulin-1 (PCM1) from Solanum tuberosum (Potato).